The following is an 899-amino-acid chain: Semaphorin-1A (899 aa).

A compositionally biased stretch (low complexity) spans 1-20 (MLNSHNTNHNNNSASNSNYN). Residues 1 to 24 (MLNSHNTNHNNNSASNSNYNKGHK) are disordered. Residues 1-40 (MLNSHNTNHNNNSASNSNYNKGHKMHLKSATAKATIMKHK) are Cytoplasmic-facing. Residues 41-61 (LSKFYGYGWMQVFLLLTVLVI) form a helical membrane-spanning segment. Residues 62-657 (GNQSAWQENI…INAQYTVETL (596 aa)) lie on the Extracellular side of the membrane. N-linked (GlcNAc...) asparagine glycosylation is found at Asn63, Asn90, and Asn117. The Sema domain maps to 74–543 (KLYVELGPED…TDSQVVAIQL (470 aa)). 2 cysteine pairs are disulfide-bonded: Cys141–Cys151 and Cys169–Cys178. 3 N-linked (GlcNAc...) asparagine glycosylation sites follow: Asn187, Asn207, and Asn311. 2 disulfides stabilise this stretch: Cys288–Cys402 and Cys312–Cys361. Asn404 is a glycosylation site (N-linked (GlcNAc...) asparagine). Residues 658 to 678 (VMAVLAGSIFSLLVGFFTGYF) form a helical membrane-spanning segment. Topologically, residues 679 to 899 (CGRRCHKDED…PKNCSYIYRD (221 aa)) are cytoplasmic. Disordered regions lie at residues 735-766 (VLLP…QGPN) and 798-899 (VMGD…IYRD). Positions 809-827 (FSTTRSVKKAVNNTNTRNR) are enriched in polar residues. Over residues 828 to 837 (SLGRARRQPP) the composition is skewed to basic residues. The span at 847-876 (SNSPQQQQQQSQQPHSSSGSSPVMSNSSSS) shows a compositional bias: low complexity.

Belongs to the semaphorin family. As to expression, expressed by subsets of neurons and muscles.

It is found in the cell membrane. Its function is as follows. Involved in growth cone guidance through its role in axonal repulsion. Function in neurons is essential for adult survival, motor neuron survival, and is important for climbing behavior and activity. The protein is Semaphorin-1A of Drosophila melanogaster (Fruit fly).